A 337-amino-acid chain; its full sequence is Ribosomal RNA small subunit methyltransferase C (337 aa).

Belongs to the methyltransferase superfamily. RsmC family. Monomer.

It is found in the cytoplasm. It carries out the reaction guanosine(1207) in 16S rRNA + S-adenosyl-L-methionine = N(2)-methylguanosine(1207) in 16S rRNA + S-adenosyl-L-homocysteine + H(+). In terms of biological role, specifically methylates the guanine in position 1207 of 16S rRNA in the 30S particle. In Acinetobacter baumannii (strain ACICU), this protein is Ribosomal RNA small subunit methyltransferase C.